Consider the following 408-residue polypeptide: Succinylornithine transaminase (408 aa).

Lys252 carries the post-translational modification N6-(pyridoxal phosphate)lysine.

The protein belongs to the class-III pyridoxal-phosphate-dependent aminotransferase family. AstC subfamily. The cofactor is pyridoxal 5'-phosphate.

It catalyses the reaction N(2)-succinyl-L-ornithine + 2-oxoglutarate = N-succinyl-L-glutamate 5-semialdehyde + L-glutamate. The protein operates within amino-acid degradation; L-arginine degradation via AST pathway; L-glutamate and succinate from L-arginine: step 3/5. Its function is as follows. Catalyzes the transamination of N(2)-succinylornithine and alpha-ketoglutarate into N(2)-succinylglutamate semialdehyde and glutamate. Can also act as an acetylornithine aminotransferase. In Salmonella newport (strain SL254), this protein is Succinylornithine transaminase.